Here is a 206-residue protein sequence, read N- to C-terminus: 3-demethoxyubiquinol 3-hydroxylase (206 aa).

6 residues coordinate Fe cation: Glu55, Glu85, His88, Glu137, Glu169, and His172.

Belongs to the COQ7 family. It depends on Fe cation as a cofactor.

It localises to the cell membrane. The enzyme catalyses a 5-methoxy-2-methyl-3-(all-trans-polyprenyl)benzene-1,4-diol + AH2 + O2 = a 3-demethylubiquinol + A + H2O. The protein operates within cofactor biosynthesis; ubiquinone biosynthesis. Catalyzes the hydroxylation of 2-nonaprenyl-3-methyl-6-methoxy-1,4-benzoquinol during ubiquinone biosynthesis. This Aromatoleum aromaticum (strain DSM 19018 / LMG 30748 / EbN1) (Azoarcus sp. (strain EbN1)) protein is 3-demethoxyubiquinol 3-hydroxylase.